The sequence spans 436 residues: Putative ankyrin repeat protein FPV245 (436 aa).

ANK repeat units follow at residues 1 to 30 (MSVD…CINI), 34 to 63 (ETTT…QVNH), 67 to 96 (KIPN…DTSI), 98 to 119 (PVPC…KVNT), 123 to 152 (KSKT…DVNI), 156 to 185 (NGCY…YANV), 189 to 218 (YGNS…NISN), 222 to 252 (NGVT…DTDV), 253 to 283 (DGYT…DISI), and 287 to 317 (NGRN…LINE).

This is Putative ankyrin repeat protein FPV245 from Vertebrata (FPV).